Reading from the N-terminus, the 353-residue chain is Inactive ADP-ribosyltransferase ARH2 (353 aa).

Position 27 is a phosphoserine (Ser27).

This sequence belongs to the ADP-ribosylglycohydrolase family.

The protein resides in the cytoplasm. It is found in the myofibril. Its subcellular location is the sarcomere. Functionally, required for myofibril assembly and outgrowth of the cardiac chambers in the developing heart. Appears to be catalytically inactive, showing no activity against O-acetyl-ADP-ribose. The sequence is that of Inactive ADP-ribosyltransferase ARH2 (Adprhl1) from Rattus norvegicus (Rat).